Here is a 390-residue protein sequence, read N- to C-terminus: Zinc finger CCCH domain-containing protein 46 (390 aa).

The C3H1-type zinc-finger motif lies at 2-29 (SRRQEICRNFQRGSCKYGAQCRYLHASP). The tract at residues 27-129 (ASPHQQQQQQ…AAHTSCEDPQ (103 aa)) is disordered. Low complexity predominate over residues 48 to 76 (GSRQQQQPSFGSQFQQQQQQQQKPNPFGF). Positions 106–129 (PTKQTEAVQPPQAQAAHTSCEDPQ) are enriched in polar residues. The tract at residues 146 to 211 (WKLTCYAHLR…FTNLLNSARP (66 aa)) is required for transcriptional activation activity. Residues 230 to 248 (SSFGASQTNGPPVFSSFSQ) show a composition bias toward polar residues. The segment at 230-284 (SSFGASQTNGPPVFSSFSQIGAATNIGPGPGTTAPGMPASSPFGHPSSAPLAAPT) is disordered. The span at 250–268 (GAATNIGPGPGTTAPGMPA) shows a compositional bias: low complexity.

Interacts with GSK1 and GSK4. In terms of processing, phosphorylated on serine and threonine residues by GSK1. Phosphorylation represses nuclear localization. As to expression, expressed in the adaxial face of the collar, nodes and the basal region of elongating internodes.

The protein localises to the nucleus. It is found in the cytoplasm. In terms of biological role, transcriptional activator that binds double-stranded DNA and the single-stranded RNA polymers poly(rA), poly(rU) and poly(rG), but not poly(rC). Mediates optimal plant architecture through brassinosteroid (BR) signaling. May act as a negative regulator in sterol homeostasis. Acts as a negative regulator of BR signaling. Binds to the specific DNA sequence 5'-CTCGC-3' of BZR1 promoter and negatively regulates BZR1. Acts as an antagonistic transcription factor of BZR1 to attenuate the BR signaling pathway and regulate leaf bending. Represses the expression of ILI1, and activates that of IBH1 to balance the regulation activity of BZR1. The protein is Zinc finger CCCH domain-containing protein 46 of Oryza sativa subsp. japonica (Rice).